A 433-amino-acid polypeptide reads, in one-letter code: GTPase Obg (433 aa).

The Obg domain occupies 1–159 (MKFVDSADLI…FEIRAELKVL (159 aa)). The region spanning 160 to 332 (ADVGFVGLPN…LLFMIYEELK (173 aa)) is the OBG-type G domain. GTP is bound by residues 166–173 (GLPNAGKS), 191–195 (FTTIT), 213–216 (DLPG), 284–287 (NKMD), and 313–315 (SGL). Residues Ser-173 and Thr-193 each contribute to the Mg(2+) site. One can recognise an OCT domain in the interval 355-433 (KFEEQKEDIQ…VFDYELEWTD (79 aa)).

The protein belongs to the TRAFAC class OBG-HflX-like GTPase superfamily. OBG GTPase family. As to quaternary structure, monomer. Mg(2+) is required as a cofactor.

The protein localises to the cytoplasm. Functionally, an essential GTPase which binds GTP, GDP and possibly (p)ppGpp with moderate affinity, with high nucleotide exchange rates and a fairly low GTP hydrolysis rate. Plays a role in control of the cell cycle, stress response, ribosome biogenesis and in those bacteria that undergo differentiation, in morphogenesis control. The sequence is that of GTPase Obg from Mycoplasma mycoides subsp. mycoides SC (strain CCUG 32753 / NCTC 10114 / PG1).